The chain runs to 311 residues: Aspartate carbamoyltransferase catalytic subunit (311 aa).

Carbamoyl phosphate is bound by residues Arg55 and Thr56. An L-aspartate-binding site is contributed by Lys85. Carbamoyl phosphate is bound by residues Arg106, His135, and Gln138. 2 residues coordinate L-aspartate: Arg168 and Arg230. 2 residues coordinate carbamoyl phosphate: Leu268 and Pro269.

It belongs to the aspartate/ornithine carbamoyltransferase superfamily. ATCase family. As to quaternary structure, heterododecamer (2C3:3R2) of six catalytic PyrB chains organized as two trimers (C3), and six regulatory PyrI chains organized as three dimers (R2).

The catalysed reaction is carbamoyl phosphate + L-aspartate = N-carbamoyl-L-aspartate + phosphate + H(+). It participates in pyrimidine metabolism; UMP biosynthesis via de novo pathway; (S)-dihydroorotate from bicarbonate: step 2/3. Functionally, catalyzes the condensation of carbamoyl phosphate and aspartate to form carbamoyl aspartate and inorganic phosphate, the committed step in the de novo pyrimidine nucleotide biosynthesis pathway. This chain is Aspartate carbamoyltransferase catalytic subunit, found in Salmonella paratyphi C (strain RKS4594).